A 140-amino-acid chain; its full sequence is Nucleoside diphosphate kinase (140 aa).

ATP-binding residues include K11, F59, R87, T93, R104, and N114. The active-site Pros-phosphohistidine intermediate is H117.

It belongs to the NDK family. In terms of assembly, homotetramer. Mg(2+) serves as cofactor.

Its subcellular location is the cytoplasm. The catalysed reaction is a 2'-deoxyribonucleoside 5'-diphosphate + ATP = a 2'-deoxyribonucleoside 5'-triphosphate + ADP. It carries out the reaction a ribonucleoside 5'-diphosphate + ATP = a ribonucleoside 5'-triphosphate + ADP. Functionally, major role in the synthesis of nucleoside triphosphates other than ATP. The ATP gamma phosphate is transferred to the NDP beta phosphate via a ping-pong mechanism, using a phosphorylated active-site intermediate. This chain is Nucleoside diphosphate kinase, found in Jannaschia sp. (strain CCS1).